Consider the following 147-residue polypeptide: Zinc-dependent sulfurtransferase SufU (147 aa).

The Zn(2+) site is built by cysteine 41, aspartate 43, cysteine 66, and cysteine 128.

It belongs to the NifU family. Interacts with SufS; this interaction enhances SufS cysteine desulfurase activity. Interacts with frataxin/Fra. Requires Zn(2+) as cofactor.

In terms of biological role, part of the SUF-like system that mediates the biosynthesis of iron-sulfur (Fe-S) clusters. Acts as a sulfurtransferase and thus transfers sulfur from SufS to SufB. Mechanistically, the transfer from SufS to SufU is triggered by zinc-ligand swapping that provides a free thiol from SufU to accept sulfur from SufS. In Bacillus subtilis (strain 168), this protein is Zinc-dependent sulfurtransferase SufU (sufU).